Consider the following 441-residue polypeptide: tRNA modification GTPase MnmE (441 aa).

Residues Arg21, Glu78, and Lys117 each coordinate (6S)-5-formyl-5,6,7,8-tetrahydrofolate. In terms of domain architecture, TrmE-type G spans 211 to 363; sequence GIVMTIVGKP…LENKIVSKVK (153 aa). Asn221 contributes to the K(+) binding site. Residues 221–226, 240–246, and 265–268 contribute to the GTP site; these read NSGKST, TDIPGTT, and DTAG. Mg(2+) is bound at residue Ser225. K(+) is bound by residues Thr240, Ile242, and Thr245. Thr246 contacts Mg(2+). Lys441 is a binding site for (6S)-5-formyl-5,6,7,8-tetrahydrofolate.

Belongs to the TRAFAC class TrmE-Era-EngA-EngB-Septin-like GTPase superfamily. TrmE GTPase family. In terms of assembly, homodimer. Heterotetramer of two MnmE and two MnmG subunits. The cofactor is K(+).

The protein resides in the cytoplasm. In terms of biological role, exhibits a very high intrinsic GTPase hydrolysis rate. Involved in the addition of a carboxymethylaminomethyl (cmnm) group at the wobble position (U34) of certain tRNAs, forming tRNA-cmnm(5)s(2)U34. In Thermosipho melanesiensis (strain DSM 12029 / CIP 104789 / BI429), this protein is tRNA modification GTPase MnmE.